Reading from the N-terminus, the 321-residue chain is Probable arabinan endo-1,5-alpha-L-arabinosidase C (321 aa).

A signal peptide spans 1 to 18; sequence MYLYTLILLFLASANVNA. D33 (proton acceptor) is an active-site residue. N192 carries N-linked (GlcNAc...) asparagine glycosylation. E200 serves as the catalytic Proton donor. An N-linked (GlcNAc...) asparagine glycan is attached at N224.

Belongs to the glycosyl hydrolase 43 family.

The protein resides in the secreted. The catalysed reaction is Endohydrolysis of (1-&gt;5)-alpha-arabinofuranosidic linkages in (1-&gt;5)-arabinans.. The protein operates within glycan metabolism; L-arabinan degradation. Functionally, endo-1,5-alpha-L-arabinanase involved in degradation of pectin. Its preferred substrate is linear 1,5-alpha-L-arabinan. This is Probable arabinan endo-1,5-alpha-L-arabinosidase C (abnC) from Aspergillus fumigatus (strain ATCC MYA-4609 / CBS 101355 / FGSC A1100 / Af293) (Neosartorya fumigata).